The primary structure comprises 385 residues: MGCGASRKVVPGPPALAWAKHEGQNQAGVGGAGPGPEAAAQAAQRIQVARFRAKFDPRVLARYDIKALIGTGSFSRVVRVEQKTTKKPFAIKVMETREREGREACVSELSVLRRVSHRYIVQLMEIFETEDQVYMVMELATGGELFDRLIAQGSFTERDAVRILQMVADGIRYLHALQITHRNLKPENLLYYHPGEESKILITDFGLAYSGKKSGDWTMKTLCGTPEYIAPEVLLRKPYTSAVDMWALGVITYALLSGFLPFDDESQTRLYRKILKGKYNYTGEPWPSISHLAKDFIDKLLILEAGHRMSAGQALDHPWVITMAAGSSMKNLQRAISRNLMQRASPHSQSPGSAQSSKSHYSHKSRHMWSKRNLRIVESPLSALL.

Positions 63–320 (YDIKALIGTG…AGQALDHPWV (258 aa)) constitute a Protein kinase domain. ATP is bound by residues 69–77 (IGTGSFSRV) and K92. The disordered stretch occupies residues 342 to 367 (QRASPHSQSPGSAQSSKSHYSHKSRH). Over residues 344–359 (ASPHSQSPGSAQSSKS) the composition is skewed to low complexity.

This sequence belongs to the protein kinase superfamily. CAMK Ser/Thr protein kinase family.

It carries out the reaction L-seryl-[protein] + ATP = O-phospho-L-seryl-[protein] + ADP + H(+). It catalyses the reaction L-threonyl-[protein] + ATP = O-phospho-L-threonyl-[protein] + ADP + H(+). The protein is Serine/threonine-protein kinase H2 (PSKH2) of Homo sapiens (Human).